A 361-amino-acid chain; its full sequence is MYAVEDRHHPVPPPLSMDRISAPSVQYPSGTTSLRQSDHLAPVSNYQDGRSWSLQVVQQPIRARMCGFGDKVGDFSAVILLPLPNTSQDRRPITPPPCIRLIVRDAQTDKEIDIKCVQPATLIPLSFLTVSSSSEIDTSFYVLTVDLWNADGTSEVNLVKHSATSPSISTAMSSSYPPPPQSVSPTYPGYNQNQYPVGYPPQMNNYYGGQQVAYQNQYGQPVTYPQYYSGGQMPASMSPAAQPVTGGPGGMFTRNLIGSLSASAFRLTDPDNKIGVWFILQDLSVRTEGTFRLKMSFVDVGTSTETSNGAPVIEPHQSWPRFSLNPSRSSPPKSSPVLLRAPSSASALRYRVSRSPFARTE.

Disordered regions lie at residues 1-36 (MYAVEDRHHPVPPPLSMDRISAPSVQYPSGTTSLRQ) and 308-340 (NGAPVIEPHQSWPRFSLNPSRSSPPKSSPVLLR). A compositionally biased stretch (polar residues) spans 23–35 (PSVQYPSGTTSLR). In terms of domain architecture, Velvet spans 47 to 353 (QDGRSWSLQV…SASALRYRVS (307 aa)). Residues 323–336 (SLNPSRSSPPKSSP) show a composition bias toward low complexity.

The protein belongs to the velvet family. VelB subfamily. In terms of assembly, component of the heterotrimeric velvet complex composed of laeA, veA and velB; VeA acting as a bridging protein between laeA and velB. Interacts with velA. Forms a heterodimeric complex with vosA; the formation of the velB-vosA complex is light-dependent. Interacts with vosA.

The protein localises to the nucleus. It is found in the cytoplasm. In terms of biological role, component of the velvet transcription factor complex that controls sexual/asexual developmental ratio in response to light, promoting sexual development in the darkness while stimulating asexual sporulation under illumination. The velvet complex acts as a global regulator for secondary metabolite gene expression. Component of the velB-VosA heterodimeric complex that plays a dual role in activating genes associated with spore maturation and repressing certain development-associated genes. The velB-VosA complex binds DNA through the DNA-binding domain of vosA that recognizes an 11-nucleotide consensus sequence 5'-CTGGCCGCGGC-3' consisting of two motifs in the promoters of key developmental regulatory genes. Controls conidiophore formation. The protein is Velvet complex subunit B of Penicillium rubens (strain ATCC 28089 / DSM 1075 / NRRL 1951 / Wisconsin 54-1255) (Penicillium chrysogenum).